The sequence spans 455 residues: Alpha-1,3/1,6-mannosyltransferase ALG2 (455 aa).

Residues 73–95 (FGRFYILCAILRQFVLVASLILW) traverse the membrane as a helical segment. Asn-138 carries N-linked (GlcNAc...) asparagine glycosylation. Residues 434-453 (GAVYLLGAIGVLFACIIYCI) form a helical membrane-spanning segment.

Belongs to the glycosyltransferase group 1 family. Glycosyltransferase 4 subfamily.

The protein resides in the endoplasmic reticulum membrane. It catalyses the reaction a beta-D-Man-(1-&gt;4)-beta-D-GlcNAc-(1-&gt;4)-alpha-D-GlcNAc-diphospho-di-trans,poly-cis-dolichol + GDP-alpha-D-mannose = an alpha-D-Man-(1-&gt;3)-beta-D-Man-(1-&gt;4)-beta-D-GlcNAc-(1-&gt;4)-alpha-D-GlcNAc-diphospho-di-trans,poly-cis-dolichol + GDP + H(+). It carries out the reaction an alpha-D-Man-(1-&gt;3)-beta-D-Man-(1-&gt;4)-beta-D-GlcNAc-(1-&gt;4)-alpha-D-GlcNAc-diphospho-di-trans,poly-cis-dolichol + GDP-alpha-D-mannose = an alpha-D-Man-(1-&gt;3)-[alpha-D-Man-(1-&gt;6)]-beta-D-Man-(1-&gt;4)-beta-D-GlcNAc-(1-&gt;4)-alpha-D-GlcNAc-diphospho-di-trans,poly-cis-dolichol + GDP + H(+). It functions in the pathway protein modification; protein glycosylation. Its function is as follows. Mannosylates Man(2)GlcNAc(2)-dolichol diphosphate and Man(1)GlcNAc(2)-dolichol diphosphate to form Man(3)GlcNAc(2)-dolichol diphosphate. The chain is Alpha-1,3/1,6-mannosyltransferase ALG2 (ALG2) from Rhizomucor pusillus.